The sequence spans 387 residues: 3-ketoacyl-CoA thiolase (387 aa).

The active-site Acyl-thioester intermediate is cysteine 91. Residues histidine 343 and cysteine 373 each act as proton acceptor in the active site.

The protein belongs to the thiolase-like superfamily. Thiolase family. Heterotetramer of two alpha chains (FadB) and two beta chains (FadA).

It localises to the cytoplasm. It carries out the reaction an acyl-CoA + acetyl-CoA = a 3-oxoacyl-CoA + CoA. The protein operates within lipid metabolism; fatty acid beta-oxidation. Its function is as follows. Catalyzes the final step of fatty acid oxidation in which acetyl-CoA is released and the CoA ester of a fatty acid two carbons shorter is formed. The sequence is that of 3-ketoacyl-CoA thiolase from Yersinia enterocolitica serotype O:8 / biotype 1B (strain NCTC 13174 / 8081).